Reading from the N-terminus, the 57-residue chain is uncharacterized protein (57 aa).

Positions 1–24 (MYDTWFVLTAVVLFVLVLIGNVHG) are cleaved as a signal peptide.

In terms of tissue distribution, prismatic layer of shell (at protein level).

It is found in the secreted. This is an uncharacterized protein from Margaritifera margaritifera (Freshwater pearl mussel).